The chain runs to 597 residues: Elongation factor 4 (597 aa).

The tr-type G domain occupies lysine 2–threonine 184. GTP is bound by residues aspartate 14–threonine 19 and asparagine 131–aspartate 134.

This sequence belongs to the TRAFAC class translation factor GTPase superfamily. Classic translation factor GTPase family. LepA subfamily.

The protein resides in the cell inner membrane. The catalysed reaction is GTP + H2O = GDP + phosphate + H(+). Required for accurate and efficient protein synthesis under certain stress conditions. May act as a fidelity factor of the translation reaction, by catalyzing a one-codon backward translocation of tRNAs on improperly translocated ribosomes. Back-translocation proceeds from a post-translocation (POST) complex to a pre-translocation (PRE) complex, thus giving elongation factor G a second chance to translocate the tRNAs correctly. Binds to ribosomes in a GTP-dependent manner. In Neisseria meningitidis serogroup B (strain ATCC BAA-335 / MC58), this protein is Elongation factor 4.